A 438-amino-acid polypeptide reads, in one-letter code: 23S rRNA (uracil(1939)-C(5))-methyltransferase RlmD (438 aa).

Residues 10 to 68 form the TRAM domain; sequence KTKNVQTITADILDLDYQGLGVAKINGKTWFIENALPHEKVECRILEDKRQYGHAIVKK. Residues cysteine 81, cysteine 87, cysteine 90, and cysteine 168 each contribute to the [4Fe-4S] cluster site. The S-adenosyl-L-methionine site is built by glutamine 271, phenylalanine 300, asparagine 305, glutamate 321, aspartate 348, and aspartate 369. The active-site Nucleophile is the cysteine 395.

Belongs to the class I-like SAM-binding methyltransferase superfamily. RNA M5U methyltransferase family. RlmD subfamily.

The catalysed reaction is uridine(1939) in 23S rRNA + S-adenosyl-L-methionine = 5-methyluridine(1939) in 23S rRNA + S-adenosyl-L-homocysteine + H(+). Catalyzes the formation of 5-methyl-uridine at position 1939 (m5U1939) in 23S rRNA. This chain is 23S rRNA (uracil(1939)-C(5))-methyltransferase RlmD, found in Haemophilus influenzae (strain ATCC 51907 / DSM 11121 / KW20 / Rd).